Consider the following 213-residue polypeptide: Imidazole glycerol phosphate synthase subunit HisH 1 (213 aa).

The 211-residue stretch at 3–213 folds into the Glutamine amidotransferase type-1 domain; the sequence is SVSIVDYGVG…LSIIQQFLQI (211 aa). Residue Cys-81 is the Nucleophile of the active site. Catalysis depends on residues His-195 and Glu-197.

As to quaternary structure, heterodimer of HisH and HisF.

It is found in the cytoplasm. The enzyme catalyses 5-[(5-phospho-1-deoxy-D-ribulos-1-ylimino)methylamino]-1-(5-phospho-beta-D-ribosyl)imidazole-4-carboxamide + L-glutamine = D-erythro-1-(imidazol-4-yl)glycerol 3-phosphate + 5-amino-1-(5-phospho-beta-D-ribosyl)imidazole-4-carboxamide + L-glutamate + H(+). It carries out the reaction L-glutamine + H2O = L-glutamate + NH4(+). It participates in amino-acid biosynthesis; L-histidine biosynthesis; L-histidine from 5-phospho-alpha-D-ribose 1-diphosphate: step 5/9. Functionally, IGPS catalyzes the conversion of PRFAR and glutamine to IGP, AICAR and glutamate. The HisH subunit provides the glutamine amidotransferase activity that produces the ammonia necessary to HisF for the synthesis of IGP and AICAR. The protein is Imidazole glycerol phosphate synthase subunit HisH 1 of Legionella pneumophila (strain Paris).